A 287-amino-acid polypeptide reads, in one-letter code: Large ribosomal subunit protein uL2 (287 aa).

A disordered region spans residues 221–287 (RGSVMNPCDH…SKRSRGGRDS (67 aa)). A compositionally biased stretch (basic residues) spans 258-287 (KTRKRNKPSNKFVLRKRRKTSKRSRGGRDS).

It belongs to the universal ribosomal protein uL2 family. As to quaternary structure, part of the 50S ribosomal subunit. Forms a bridge to the 30S subunit in the 70S ribosome.

One of the primary rRNA binding proteins. Required for association of the 30S and 50S subunits to form the 70S ribosome, for tRNA binding and peptide bond formation. It has been suggested to have peptidyltransferase activity; this is somewhat controversial. Makes several contacts with the 16S rRNA in the 70S ribosome. The chain is Large ribosomal subunit protein uL2 from Synechococcus sp. (strain RCC307).